The following is a 302-amino-acid chain: Riboflavin transporter (302 aa).

Helical transmembrane passes span 16 to 36, 44 to 64, 87 to 107, 109 to 129, 158 to 178, 191 to 213, 227 to 247, and 264 to 284; these read AVVG…LNVV, LAFP…LFSL, VVLA…VPIW, AIAL…LFLG, IGWA…SSLI, ITVW…AGFA, GLLT…ADAA, and GWLF…ALIL. EamA domains are found at residues 30-151 and 170-291; these read FSLL…MIIL and LLWG…LFIM.

This sequence belongs to the drug/metabolite transporter (DMT) superfamily. 10 TMS drug/metabolite exporter (DME) (TC 2.A.7.3) family.

It localises to the cell membrane. Its function is as follows. Transports riboflavin into the cell. Can also transport FMN and FAD. Required for normal nodule development during colonization of pea plant roots. The polypeptide is Riboflavin transporter (Rhizobium johnstonii (strain DSM 114642 / LMG 32736 / 3841) (Rhizobium leguminosarum bv. viciae)).